The following is a 604-amino-acid chain: Asparagine synthetase [glutamine-hydrolyzing] 1 (604 aa).

Cys2 serves as the catalytic Nucleophile. Positions 2–186 (CGILAVLGAA…PGHLYSSAAG (185 aa)) constitute a Glutamine amidotransferase type-2 domain. L-glutamine is bound by residues 50-54 (RLAIV), 75-77 (NGE), and Asp99. An Asparagine synthetase domain is found at 211–451 (LREAFEKAVI…LPKHILYRQK (241 aa)). Residues Leu232, Val268, and 342–343 (SG) each bind ATP.

It carries out the reaction L-aspartate + L-glutamine + ATP + H2O = L-asparagine + L-glutamate + AMP + diphosphate + H(+). The protein operates within amino-acid biosynthesis; L-asparagine biosynthesis. Functionally, essential for nitrogen assimilation, distribution and remobilization within the plant via the phloem. This Oryza sativa subsp. japonica (Rice) protein is Asparagine synthetase [glutamine-hydrolyzing] 1.